A 96-amino-acid chain; its full sequence is Large ribosomal subunit protein eL43 (96 aa).

The C4-type zinc finger occupies 41–62 (CPVCGFMKLKRISTSIWECKKC).

Belongs to the eukaryotic ribosomal protein eL43 family. Zn(2+) is required as a cofactor.

In Methanococcus aeolicus (strain ATCC BAA-1280 / DSM 17508 / OCM 812 / Nankai-3), this protein is Large ribosomal subunit protein eL43.